A 357-amino-acid polypeptide reads, in one-letter code: Multiple sugar-binding periplasmic protein SbpA (357 aa).

A signal peptide spans methionine 1–alanine 20.

This sequence belongs to the bacterial solute-binding protein 2 family.

It is found in the periplasm. Mediates chemotaxis towards D-galactose, L-arabinose and D-fucose but not towards D-fructose. Probably part of a binding-protein high affinity uptake system. The polypeptide is Multiple sugar-binding periplasmic protein SbpA (sbpA) (Azospirillum brasilense).